We begin with the raw amino-acid sequence, 315 residues long: Fructose-1,6-bisphosphatase class 1 (315 aa).

Residues Glu-90, Asp-111, Leu-113, and Asp-114 each contribute to the Mg(2+) site. Substrate-binding positions include 114–117 (DGSS), Tyr-222, and Lys-253. A Mg(2+)-binding site is contributed by Glu-259.

It belongs to the FBPase class 1 family. In terms of assembly, homotetramer. Requires Mg(2+) as cofactor.

It localises to the cytoplasm. It carries out the reaction beta-D-fructose 1,6-bisphosphate + H2O = beta-D-fructose 6-phosphate + phosphate. It functions in the pathway carbohydrate biosynthesis; gluconeogenesis. In Trichlorobacter lovleyi (strain ATCC BAA-1151 / DSM 17278 / SZ) (Geobacter lovleyi), this protein is Fructose-1,6-bisphosphatase class 1.